We begin with the raw amino-acid sequence, 226 residues long: Apoptosis regulator OPG045 (226 aa).

Residues 32-37 form an essential and sufficient to inhibit host NLRP1 region; it reads NVDHDY.

This sequence belongs to the orthopoxvirus OPG045 family. Homodimer. Interacts with host pro-apoptotic protein BCL2L11 (via BH3 domain). Interacts with host NLRP1. Interacts with host BAK.

The protein localises to the host mitochondrion outer membrane. It is found in the host cytoplasm. Plays a role in evading host innate immune response by inhibiting host inflammasome activation. Interacts with and inhibits NLR-mediated interleukin-1 beta/IL1B production in infected cells. At the host mitochondria outer membrane, interacts with the BH3 domain of host BAK and prevents BAK from binding active BAX. In turn, host apoptosis is inhibited. This chain is Apoptosis regulator OPG045 (OPG045), found in Vaccinia virus (strain Western Reserve) (VACV).